A 97-amino-acid chain; its full sequence is Putative septation protein SpoVG (97 aa).

Belongs to the SpoVG family.

Functionally, could be involved in septation. In Borreliella afzelii (strain PKo) (Borrelia afzelii), this protein is Putative septation protein SpoVG.